The primary structure comprises 245 residues: Transmembrane protein 116 (245 aa).

A run of 4 helical transmembrane segments spans residues 24–44 (MAFV…FCLG), 88–108 (GIAI…VLLI), 141–161 (FYPV…IIKL), and 173–195 (LYVL…YGWT).

It is found in the membrane. This Homo sapiens (Human) protein is Transmembrane protein 116 (TMEM116).